A 424-amino-acid chain; its full sequence is Glutamate-1-semialdehyde 2,1-aminomutase (424 aa).

Lysine 265 carries the post-translational modification N6-(pyridoxal phosphate)lysine.

It belongs to the class-III pyridoxal-phosphate-dependent aminotransferase family. HemL subfamily. Homodimer. It depends on pyridoxal 5'-phosphate as a cofactor.

The protein resides in the cytoplasm. The catalysed reaction is (S)-4-amino-5-oxopentanoate = 5-aminolevulinate. The protein operates within porphyrin-containing compound metabolism; protoporphyrin-IX biosynthesis; 5-aminolevulinate from L-glutamyl-tRNA(Glu): step 2/2. The polypeptide is Glutamate-1-semialdehyde 2,1-aminomutase (Alkaliphilus oremlandii (strain OhILAs) (Clostridium oremlandii (strain OhILAs))).